The primary structure comprises 871 residues: DNA mismatch repair protein MutS (871 aa).

625 to 632 (GPNMAGKS) contributes to the ATP binding site.

Belongs to the DNA mismatch repair MutS family.

In terms of biological role, this protein is involved in the repair of mismatches in DNA. It is possible that it carries out the mismatch recognition step. This protein has a weak ATPase activity. This chain is DNA mismatch repair protein MutS, found in Chlorobium limicola (strain DSM 245 / NBRC 103803 / 6330).